A 233-amino-acid polypeptide reads, in one-letter code: Sugar fermentation stimulation protein homolog (233 aa).

The protein belongs to the SfsA family.

This is Sugar fermentation stimulation protein homolog from Chelativorans sp. (strain BNC1).